We begin with the raw amino-acid sequence, 422 residues long: Ubiquitin-conjugating enzyme E2 Q1 (422 aa).

Methionine 1 is subject to N-acetylmethionine. Residues 1 to 15 (MQQPQPQGQQQPGPG) show a composition bias toward low complexity. 2 disordered regions span residues 1-40 (MQQPQPQGQQQPGPGQQLGGQGAAPGAGGGPGGGPGPGPC) and 174-221 (PLPA…EDDG). Positions 16–35 (QQLGGQGAAPGAGGGPGGGP) are enriched in gly residues. The segment covering 185 to 200 (VSSEDEDEEMPEDTED) has biased composition (acidic residues). Residues 212 to 221 (AEGKKSEDDG) are compositionally biased toward basic and acidic residues. Residues 251–415 (QATDRLMKEL…VQIHEKNGWY (165 aa)) form the UBC core domain. Residue cysteine 351 is the Glycyl thioester intermediate of the active site.

It belongs to the ubiquitin-conjugating enzyme family. In terms of assembly, monomer and homodimer. Only the homodimer is linked to ubiquitin through thiolester activation. Interacts (via N-terminus) with B4GALT1 (via N-terminal cytoplasmic domain). The interaction is direct. Post-translationally, autoubiquitinated in vitro in the presence of NEDD4L. Widely expressed.

It is found in the nucleus. Its subcellular location is the cell projection. The protein localises to the filopodium. It localises to the cytoplasm. The protein resides in the cytosol. It catalyses the reaction S-ubiquitinyl-[E1 ubiquitin-activating enzyme]-L-cysteine + [E2 ubiquitin-conjugating enzyme]-L-cysteine = [E1 ubiquitin-activating enzyme]-L-cysteine + S-ubiquitinyl-[E2 ubiquitin-conjugating enzyme]-L-cysteine.. The protein operates within protein modification; protein ubiquitination. In terms of biological role, catalyzes the covalent attachment of ubiquitin to other proteins. May be involved in hormonal homeostasis in females. Involved in regulation of B4GALT1 cell surface expression, B4GALT1-mediated cell adhesion to laminin and embryoid body formation. This is Ubiquitin-conjugating enzyme E2 Q1 (UBE2Q1) from Homo sapiens (Human).